We begin with the raw amino-acid sequence, 314 residues long: Ribosomal protein L11 methyltransferase (314 aa).

Thr161, Gly182, Asp204, and Asn248 together coordinate S-adenosyl-L-methionine.

The protein belongs to the methyltransferase superfamily. PrmA family.

The protein resides in the cytoplasm. It carries out the reaction L-lysyl-[protein] + 3 S-adenosyl-L-methionine = N(6),N(6),N(6)-trimethyl-L-lysyl-[protein] + 3 S-adenosyl-L-homocysteine + 3 H(+). In terms of biological role, methylates ribosomal protein L11. The protein is Ribosomal protein L11 methyltransferase of Listeria innocua serovar 6a (strain ATCC BAA-680 / CLIP 11262).